The sequence spans 251 residues: Flap endonuclease Xni (251 aa).

A Mg(2+)-binding site is contributed by Asp-104. The 90-residue stretch at 160–249 (VLPRQLPDYW…IDGNLQQLRL (90 aa)) folds into the 5'-3' exonuclease domain. K(+) is bound by residues Leu-171, Ala-172, Pro-180, Val-182, and Ile-185. The segment at 184 to 189 (GIGPKS) is interaction with DNA.

The protein belongs to the Xni family. The cofactor is Mg(2+). It depends on K(+) as a cofactor.

Its function is as follows. Has flap endonuclease activity. During DNA replication, flap endonucleases cleave the 5'-overhanging flap structure that is generated by displacement synthesis when DNA polymerase encounters the 5'-end of a downstream Okazaki fragment. This Salmonella schwarzengrund (strain CVM19633) protein is Flap endonuclease Xni.